A 148-amino-acid chain; its full sequence is Cystatin-C (148 aa).

The first 28 residues, methionine 1–glycine 28, serve as a signal peptide directing secretion. Residues glutamine 83–glycine 87 carry the Secondary area of contact motif. 2 cysteine pairs are disulfide-bonded: cysteine 101/cysteine 111 and cysteine 125/cysteine 145.

It belongs to the cystatin family.

It is found in the secreted. Its function is as follows. This is a thiol proteinase inhibitor. The protein is Cystatin-C (CST3) of Oryctolagus cuniculus (Rabbit).